A 563-amino-acid polypeptide reads, in one-letter code: Arginine--tRNA ligase (563 aa).

The short motif at 121–131 (PNIAKPFSIGH) is the 'HIGH' region element.

This sequence belongs to the class-I aminoacyl-tRNA synthetase family. Monomer.

The protein resides in the cytoplasm. The enzyme catalyses tRNA(Arg) + L-arginine + ATP = L-arginyl-tRNA(Arg) + AMP + diphosphate. This chain is Arginine--tRNA ligase, found in Streptococcus thermophilus (strain CNRZ 1066).